Here is a 240-residue protein sequence, read N- to C-terminus: 2,3,4,5-tetrahydropyridine-2,6-dicarboxylate N-acetyltransferase (240 aa).

The protein belongs to the transferase hexapeptide repeat family. DapH subfamily.

It catalyses the reaction (S)-2,3,4,5-tetrahydrodipicolinate + acetyl-CoA + H2O = L-2-acetamido-6-oxoheptanedioate + CoA. Its pathway is amino-acid biosynthesis; L-lysine biosynthesis via DAP pathway; LL-2,6-diaminopimelate from (S)-tetrahydrodipicolinate (acetylase route): step 1/3. Catalyzes the transfer of an acetyl group from acetyl-CoA to tetrahydrodipicolinate. In Bacillus thuringiensis (strain Al Hakam), this protein is 2,3,4,5-tetrahydropyridine-2,6-dicarboxylate N-acetyltransferase.